Consider the following 116-residue polypeptide: Cuticle protein AM1274 (116 aa).

Pyrrolidone carboxylic acid is present on glutamine 1. Positions 1–22 are disordered; the sequence is QLANEPPIEIIRQESTDNGDGN. The Chitin-binding type R&amp;R domain occupies 20 to 85; the sequence is DGNFNFLFET…PVSDFIPTPH (66 aa). The O-linked (HexNAc) threonine glycan is linked to threonine 83.

In terms of tissue distribution, arthrodial membrane.

This is Cuticle protein AM1274 from Cancer pagurus (Rock crab).